Here is a 312-residue protein sequence, read N- to C-terminus: L-lactate dehydrogenase (312 aa).

NAD(+)-binding residues include V14, D35, and Y66. Substrate-binding residues include Q83 and R90. NAD(+)-binding positions include S103, 120-122 (ASN), and S145. A substrate-binding site is contributed by 122-125 (NPVD). Residue 150-153 (DSAR) participates in substrate binding. H177 serves as the catalytic Proton acceptor. At Y220 the chain carries Phosphotyrosine. Position 229 (T229) interacts with substrate.

Belongs to the LDH/MDH superfamily. LDH family. As to quaternary structure, homotetramer.

It localises to the cytoplasm. It carries out the reaction (S)-lactate + NAD(+) = pyruvate + NADH + H(+). It functions in the pathway fermentation; pyruvate fermentation to lactate; (S)-lactate from pyruvate: step 1/1. In terms of biological role, catalyzes the conversion of lactate to pyruvate. The chain is L-lactate dehydrogenase from Mycoplasma genitalium (strain ATCC 33530 / DSM 19775 / NCTC 10195 / G37) (Mycoplasmoides genitalium).